The chain runs to 279 residues: tRNA pseudouridine synthase A (279 aa).

Asp54 functions as the Nucleophile in the catalytic mechanism. Tyr112 serves as a coordination point for substrate.

It belongs to the tRNA pseudouridine synthase TruA family. Homodimer.

It carries out the reaction uridine(38/39/40) in tRNA = pseudouridine(38/39/40) in tRNA. Formation of pseudouridine at positions 38, 39 and 40 in the anticodon stem and loop of transfer RNAs. The protein is tRNA pseudouridine synthase A of Cutibacterium acnes (strain DSM 16379 / KPA171202) (Propionibacterium acnes).